We begin with the raw amino-acid sequence, 37 residues long: Photosystem I reaction center subunit VIII (37 aa).

A helical membrane pass occupies residues Leu-7–Leu-27.

Belongs to the PsaI family.

It localises to the plastid. The protein localises to the chloroplast thylakoid membrane. Its function is as follows. May help in the organization of the PsaL subunit. The polypeptide is Photosystem I reaction center subunit VIII (Populus alba (White poplar)).